A 136-amino-acid polypeptide reads, in one-letter code: Autophagy-related protein 41 (136 aa).

An ATG9-binding region spans residues 127 to 136; sequence QNYRLWLSSV.

In terms of assembly, interacts with ATG9.

It is found in the preautophagosomal structure membrane. Its function is as follows. Involved in both selective and non-selective autophagy. Does not appear to play a role in determining the size of autophagosomes, but rather influences their formation rate. With ATG9, plays a role in the delivery of donor membrane to expanding phagophore. This is Autophagy-related protein 41 from Saccharomyces cerevisiae (strain ATCC 204508 / S288c) (Baker's yeast).